Reading from the N-terminus, the 339-residue chain is Anthranilate phosphoribosyltransferase (339 aa).

Residues G80, 83-84 (GD), T88, 90-93 (NIST), 108-116 (KHGNRSVSS), and S120 each bind 5-phospho-alpha-D-ribose 1-diphosphate. G80 lines the anthranilate pocket. A Mg(2+)-binding site is contributed by S92. An anthranilate-binding site is contributed by N111. Position 166 (R166) interacts with anthranilate. Residues D225 and E226 each coordinate Mg(2+).

It belongs to the anthranilate phosphoribosyltransferase family. Homodimer. Requires Mg(2+) as cofactor.

It catalyses the reaction N-(5-phospho-beta-D-ribosyl)anthranilate + diphosphate = 5-phospho-alpha-D-ribose 1-diphosphate + anthranilate. It functions in the pathway amino-acid biosynthesis; L-tryptophan biosynthesis; L-tryptophan from chorismate: step 2/5. In terms of biological role, catalyzes the transfer of the phosphoribosyl group of 5-phosphorylribose-1-pyrophosphate (PRPP) to anthranilate to yield N-(5'-phosphoribosyl)-anthranilate (PRA). This is Anthranilate phosphoribosyltransferase from Moorella thermoacetica (strain ATCC 39073 / JCM 9320).